The primary structure comprises 226 residues: ATP synthase F(0) complex subunit a (226 aa).

6 helical membrane passes run 14–34 (ILGI…FSAP), 68–88 (WTLM…LGLL), 97–117 (QLSM…LMGF), 138–158 (IPML…ALAV), 164–184 (ITAG…LSSI), and 193–213 (FTIL…QAYV).

This sequence belongs to the ATPase A chain family. Component of the ATP synthase complex composed at least of ATP5F1A/subunit alpha, ATP5F1B/subunit beta, ATP5MC1/subunit c (homooctomer), MT-ATP6/subunit a, MT-ATP8/subunit 8, ATP5ME/subunit e, ATP5MF/subunit f, ATP5MG/subunit g, ATP5MK/subunit k, ATP5MJ/subunit j, ATP5F1C/subunit gamma, ATP5F1D/subunit delta, ATP5F1E/subunit epsilon, ATP5PF/subunit F6, ATP5PB/subunit b, ATP5PD/subunit d, ATP5PO/subunit OSCP. ATP synthase complex consists of a soluble F(1) head domain (subunits alpha(3) and beta(3)) - the catalytic core - and a membrane F(0) domain - the membrane proton channel (subunits c, a, 8, e, f, g, k and j). These two domains are linked by a central stalk (subunits gamma, delta, and epsilon) rotating inside the F1 region and a stationary peripheral stalk (subunits F6, b, d, and OSCP). Interacts with DNAJC30; interaction is direct.

Its subcellular location is the mitochondrion inner membrane. It carries out the reaction H(+)(in) = H(+)(out). Subunit a, of the mitochondrial membrane ATP synthase complex (F(1)F(0) ATP synthase or Complex V) that produces ATP from ADP in the presence of a proton gradient across the membrane which is generated by electron transport complexes of the respiratory chain. ATP synthase complex consist of a soluble F(1) head domain - the catalytic core - and a membrane F(1) domain - the membrane proton channel. These two domains are linked by a central stalk rotating inside the F(1) region and a stationary peripheral stalk. During catalysis, ATP synthesis in the catalytic domain of F(1) is coupled via a rotary mechanism of the central stalk subunits to proton translocation. With the subunit c (ATP5MC1), forms the proton-conducting channel in the F(0) domain, that contains two crucial half-channels (inlet and outlet) that facilitate proton movement from the mitochondrial intermembrane space (IMS) into the matrix. Protons are taken up via the inlet half-channel and released through the outlet half-channel, following a Grotthuss mechanism. The protein is ATP synthase F(0) complex subunit a of Tachyglossus aculeatus aculeatus (Southeast Australian short-beaked echidna).